We begin with the raw amino-acid sequence, 210 residues long: N-(5'-phosphoribosyl)anthranilate isomerase (210 aa).

The protein belongs to the TrpF family.

The catalysed reaction is N-(5-phospho-beta-D-ribosyl)anthranilate = 1-(2-carboxyphenylamino)-1-deoxy-D-ribulose 5-phosphate. Its pathway is amino-acid biosynthesis; L-tryptophan biosynthesis; L-tryptophan from chorismate: step 3/5. This is N-(5'-phosphoribosyl)anthranilate isomerase from Pseudomonas fluorescens (strain ATCC BAA-477 / NRRL B-23932 / Pf-5).